Consider the following 497-residue polypeptide: Serine/arginine-rich protein PSR (497 aa).

The N-terminal stretch at 1–19 (MYSRCIALVFVGLLASSLA) is a signal peptide. Over 20-366 (ANCYGPAGKL…HHGLSSQKLG (347 aa)) the chain is Extracellular. Residues Asn-92, Asn-193, Asn-202, Asn-261, and Asn-283 are each glycosylated (N-linked (GlcNAc...) asparagine). A helical membrane pass occupies residues 367–387 (LAIGLPIAGVFLIILIAAAII). At 388–497 (YYRKRRESEK…ESASRDSDSD (110 aa)) the chain is on the cytoplasmic side. The interval 424 to 450 (MGSKTMQAMLDMRDDDESEHDSDDGYG) is necessary for phosphorylation by PSRPK in vitro. The segment covering 436–447 (RDDDESEHDSDD) has biased composition (acidic residues). The disordered stretch occupies residues 436-497 (RDDDESEHDS…ESASRDSDSD (62 aa)). A compositionally biased stretch (basic residues) spans 459-471 (GRSRSRSRSRSVS). The span at 476–497 (GSRDARSESDPGESASRDSDSD) shows a compositional bias: basic and acidic residues.

Phosphorylated on serine residues in the RS domain by PSRPK.

It is found in the membrane. The polypeptide is Serine/arginine-rich protein PSR (Physarum polycephalum (Slime mold)).